Consider the following 489-residue polypeptide: Probable serine protease EDA2 (489 aa).

The first 25 residues, 1–25, serve as a signal peptide directing secretion; that stretch reads MSLEFGFILINIFTAIVSFSTLSHA. 3 N-linked (GlcNAc...) asparagine glycosylation sites follow: N35, N51, and N162. S178 functions as the Charge relay system in the catalytic mechanism. Residues N253, N293, N365, and N406 are each glycosylated (N-linked (GlcNAc...) asparagine). D410 acts as the Charge relay system in catalysis. N-linked (GlcNAc...) asparagine glycosylation is present at N419. H436 functions as the Charge relay system in the catalytic mechanism. N-linked (GlcNAc...) asparagine glycosylation occurs at N456.

This sequence belongs to the peptidase S28 family.

The protein localises to the secreted. Functionally, may be involved in a proteolytic pathway controlling the nuclear division phase of megagametogenesis. The chain is Probable serine protease EDA2 (EDA2) from Arabidopsis thaliana (Mouse-ear cress).